We begin with the raw amino-acid sequence, 128 residues long: Cionin (128 aa).

An N-terminal signal peptide occupies residues 1-22 (MGSNIVIYFSIIVIVTLNVNGV). The propeptide occupies 23–108 (PASDLFKSVS…NQGHMQRMDR (86 aa)). Residues Y110 and Y111 each carry the sulfotyrosine modification. F116 carries the phenylalanine amide modification. The propeptide occupies 120–128 (AIEDVDYEY).

The protein belongs to the gastrin/cholecystokinin family. In terms of tissue distribution, expressed in both the gut and the neural ganglion.

The protein resides in the secreted. In Ciona intestinalis (Transparent sea squirt), this protein is Cionin.